A 470-amino-acid polypeptide reads, in one-letter code: tRNA modification GTPase MnmE (470 aa).

(6S)-5-formyl-5,6,7,8-tetrahydrofolate contacts are provided by Arg-30, Glu-92, and Arg-132. The 167-residue stretch at 227–393 (GLQVALVGRP…LIKAVLKTCG (167 aa)) folds into the TrmE-type G domain. Asn-237 contributes to the K(+) binding site. GTP is bound by residues 237 to 242 (NVGKSS), 256 to 262 (TDLPGTT), 281 to 284 (DTAG), and 342 to 345 (NKAD). Residue Ser-241 coordinates Mg(2+). Thr-256, Leu-258, and Thr-261 together coordinate K(+). Residue Thr-262 participates in Mg(2+) binding. Lys-470 serves as a coordination point for (6S)-5-formyl-5,6,7,8-tetrahydrofolate.

Belongs to the TRAFAC class TrmE-Era-EngA-EngB-Septin-like GTPase superfamily. TrmE GTPase family. Homodimer. Heterotetramer of two MnmE and two MnmG subunits. K(+) serves as cofactor.

It localises to the cytoplasm. Exhibits a very high intrinsic GTPase hydrolysis rate. Involved in the addition of a carboxymethylaminomethyl (cmnm) group at the wobble position (U34) of certain tRNAs, forming tRNA-cmnm(5)s(2)U34. In Prochlorococcus marinus (strain MIT 9313), this protein is tRNA modification GTPase MnmE.